A 243-amino-acid polypeptide reads, in one-letter code: Large ribosomal subunit protein uL30 (243 aa).

A disordered region spans residues 1–31; the sequence is MADKILTPESQLKKSKAQQKSAEQVAAERAA. The span at 18 to 28 shows a compositional bias: low complexity; it reads QQKSAEQVAAE.

The protein belongs to the universal ribosomal protein uL30 family.

This is Large ribosomal subunit protein uL30 (RPL7) from Eremothecium gossypii (strain ATCC 10895 / CBS 109.51 / FGSC 9923 / NRRL Y-1056) (Yeast).